We begin with the raw amino-acid sequence, 414 residues long: CinA-like protein (414 aa).

This sequence belongs to the CinA family.

The sequence is that of CinA-like protein from Koribacter versatilis (strain Ellin345).